Here is a 379-residue protein sequence, read N- to C-terminus: Pectin lyase A (379 aa).

An N-terminal signal peptide occupies residues 1–20 (MKTTFLVSLATAALSSTAAA). 2 disulfide bridges follow: C83/C102 and C92/C226. R256 is an active-site residue. A disulfide bridge connects residues C323 and C331.

Belongs to the polysaccharide lyase 1 family.

It is found in the secreted. It catalyses the reaction Eliminative cleavage of (1-&gt;4)-alpha-D-galacturonan methyl ester to give oligosaccharides with 4-deoxy-6-O-methyl-alpha-D-galact-4-enuronosyl groups at their non-reducing ends.. Its function is as follows. Pectinolytic enzymes consist of four classes of enzymes: pectin lyase, polygalacturonase, pectin methylesterase and rhamnogalacturonase. Among pectinolytic enzymes, pectin lyase is the most important in depolymerization of pectin, since it cleaves internal glycosidic bonds of highly methylated pectins. In Emericella nidulans (strain FGSC A4 / ATCC 38163 / CBS 112.46 / NRRL 194 / M139) (Aspergillus nidulans), this protein is Pectin lyase A (pelA).